We begin with the raw amino-acid sequence, 502 residues long: Galactose/methyl galactoside import ATP-binding protein MglA (502 aa).

2 consecutive ABC transporter domains span residues Leu10–Glu245 and Asn255–Leu502. Gly42–Ser49 is a binding site for ATP.

Belongs to the ABC transporter superfamily. Galactose/methyl galactoside importer (TC 3.A.1.2.3) family. The complex is composed of one ATP-binding protein (MglA), two transmembrane proteins (MglC) and a solute-binding protein (MglB).

It is found in the cell inner membrane. It catalyses the reaction D-galactose(out) + ATP + H2O = D-galactose(in) + ADP + phosphate + H(+). The catalysed reaction is methyl beta-D-galactoside(out) + ATP + H2O = methyl beta-D-galactoside(in) + ADP + phosphate + H(+). Its function is as follows. Part of the ABC transporter complex MglABC involved in galactose/methyl galactoside import. Responsible for energy coupling to the transport system. The protein is Galactose/methyl galactoside import ATP-binding protein MglA of Vibrio cholerae serotype O1 (strain ATCC 39315 / El Tor Inaba N16961).